A 209-amino-acid polypeptide reads, in one-letter code: PRA1 family protein A1 (209 aa).

The next 4 membrane-spanning stretches (helical) occupy residues 51–73, 77–99, 144–164, and 166–186; these read LYYY…VLTR, IFAA…GSFS, VFVL…SGLL, and VSVA…LRTP.

The protein belongs to the PRA1 family.

The protein localises to the endoplasmic reticulum membrane. Its function is as follows. May be involved in both secretory and endocytic intracellular trafficking in the endosomal/prevacuolar compartments. The chain is PRA1 family protein A1 (PRA1A1) from Arabidopsis thaliana (Mouse-ear cress).